We begin with the raw amino-acid sequence, 393 residues long: Arginine--pyruvate transaminase AruH (393 aa).

Residue Lys-237 is modified to N6-(pyridoxal phosphate)lysine.

It belongs to the class-I pyridoxal-phosphate-dependent aminotransferase family. Homodimer. Requires pyridoxal 5'-phosphate as cofactor.

The enzyme catalyses L-arginine + pyruvate = 5-guanidino-2-oxopentanoate + L-alanine. The protein operates within amino-acid degradation; L-arginine degradation. Functionally, catalyzes the conversion of L-arginine into 2-ketoarginine via transamination. L-arginine is the best substrate, but it can also use L-lysine, L-methionine, L-leucine, ornithine and L-glutamine, which indicates that it may have a broader physiological function in amino acid catabolism. In Pseudomonas aeruginosa (strain ATCC 15692 / DSM 22644 / CIP 104116 / JCM 14847 / LMG 12228 / 1C / PRS 101 / PAO1), this protein is Arginine--pyruvate transaminase AruH (aruH).